Reading from the N-terminus, the 84-residue chain is Perlustrin (84 aa).

The 82-residue stretch at 1–82 (LSCASCENAA…LDFKGVCARV (82 aa)) folds into the IGFBP N-terminal domain. 6 disulfides stabilise this stretch: Cys-3-Cys-28, Cys-6-Cys-30, Cys-11-Cys-31, Cys-18-Cys-34, Cys-42-Cys-55, and Cys-49-Cys-79.

As to expression, shell.

Its function is as follows. Binds human IGF1 and IGF2 and bovine insulin. This chain is Perlustrin, found in Haliotis laevigata (Smooth Australian abalone).